A 54-amino-acid polypeptide reads, in one-letter code: Large ribosomal subunit protein bL32c (54 aa).

Belongs to the bacterial ribosomal protein bL32 family.

It localises to the plastid. The protein resides in the chloroplast. This is Large ribosomal subunit protein bL32c from Helianthus annuus (Common sunflower).